A 211-amino-acid polypeptide reads, in one-letter code: Phosphoheptose isomerase (211 aa).

The region spanning 50 to 211 is the SIS domain; it reads IAGTFEDGGK…VERMLGYCRL (162 aa). Substrate is bound at residue 65 to 67; that stretch reads NGG. Histidine 74 and glutamate 78 together coordinate Zn(2+). Substrate-binding positions include glutamate 78, 109 to 110, 135 to 137, serine 140, and glutamine 188; these read ND and STS. Positions 188 and 196 each coordinate Zn(2+).

This sequence belongs to the SIS family. GmhA subfamily. Zn(2+) is required as a cofactor.

Its subcellular location is the cytoplasm. The catalysed reaction is 2 D-sedoheptulose 7-phosphate = D-glycero-alpha-D-manno-heptose 7-phosphate + D-glycero-beta-D-manno-heptose 7-phosphate. The protein operates within carbohydrate biosynthesis; D-glycero-D-manno-heptose 7-phosphate biosynthesis; D-glycero-alpha-D-manno-heptose 7-phosphate and D-glycero-beta-D-manno-heptose 7-phosphate from sedoheptulose 7-phosphate: step 1/1. Functionally, catalyzes the isomerization of sedoheptulose 7-phosphate in D-glycero-D-manno-heptose 7-phosphate. This is Phosphoheptose isomerase from Pelodictyon phaeoclathratiforme (strain DSM 5477 / BU-1).